Reading from the N-terminus, the 594-residue chain is MARPKNVKYVFVTGGVVSSLGKGILSASLGMLLKSRGLRVAIQKYDPYINVDPGTMSPYQHGEVYVTDDGAETDLDLGHYERFLNESTSQASNLTMGRVYKSVIDKERRGAYLGGTVQVVPHVIDEIKDRLAELAKNGNYDVIITEIGGTIGDIESLPFLEAMRQMKLDMGDRNLLNIHLTFVPYIRAASELKTKPTQHSVKMLLETGIQPDILVCRSEKPLSSEIKRKVGHFCNVNNLDVIGLNDCDTIYEVPLTLLQEQLDLRVLKKLGLKKFKEPDLVYWREFCNKVKHPTSGEVTIVVCGKYTEYPDAYKSILEAFIHAGASNDVKVHVRLIGAEAAENEAYDFARELEGVHGILVAPGFGDRGIEGKVAFIRYAREQGIPFFGICLGMQCASVEFARNVCNLAEANSTEFNKRARYPVIDLMEQQKKVKEKGGTMRLGSYPCIIKEGTKANEVYGKFLINERHRHRFEFNNAYRETFEEHGMVFSGTSPNGELVEIIEIKDHPWFVAVQFHPELKSRVQAVHPLFHGFVGAAKSYAAVGHQPELAAIEPHFMPEPTAEAYAAYSEESSAESKSFFPDNGGHDEERDSGQ.

The segment at 1–272 is amidoligase domain; the sequence is MARPKNVKYV…DLRVLKKLGL (272 aa). Serine 18 contributes to the CTP binding site. Serine 18 contributes to the UTP binding site. 19–24 is a binding site for ATP; sequence SLGKGI. Tyrosine 59 contacts L-glutamine. Aspartate 76 serves as a coordination point for ATP. Positions 76 and 146 each coordinate Mg(2+). Residues 153–155, 193–198, and lysine 229 each bind CTP; these read DIE and KTKPTQ. UTP-binding positions include 193-198 and lysine 229; that span reads KTKPTQ. One can recognise a Glutamine amidotransferase type-1 domain in the interval 299–543; that stretch reads TIVVCGKYTE…VGAAKSYAAV (245 aa). L-glutamine is bound at residue glycine 363. The active-site Nucleophile; for glutamine hydrolysis is the cysteine 390. L-glutamine is bound by residues 391-394, glutamate 414, and arginine 471; that span reads LGMQ. Active-site residues include histidine 516 and glutamate 518. Residues 562-571 show a composition bias toward low complexity; that stretch reads AEAYAAYSEE. Residues 562–594 form a disordered region; that stretch reads AEAYAAYSEESSAESKSFFPDNGGHDEERDSGQ. A compositionally biased stretch (basic and acidic residues) spans 584–594; the sequence is GGHDEERDSGQ.

Belongs to the CTP synthase family. As to quaternary structure, homotetramer.

The enzyme catalyses UTP + L-glutamine + ATP + H2O = CTP + L-glutamate + ADP + phosphate + 2 H(+). The catalysed reaction is L-glutamine + H2O = L-glutamate + NH4(+). It catalyses the reaction UTP + NH4(+) + ATP = CTP + ADP + phosphate + 2 H(+). It functions in the pathway pyrimidine metabolism; CTP biosynthesis via de novo pathway; CTP from UDP: step 2/2. Its activity is regulated as follows. Allosterically activated by GTP, when glutamine is the substrate; GTP has no effect on the reaction when ammonia is the substrate. The allosteric effector GTP functions by stabilizing the protein conformation that binds the tetrahedral intermediate(s) formed during glutamine hydrolysis. Inhibited by the product CTP, via allosteric rather than competitive inhibition. Its function is as follows. Catalyzes the ATP-dependent amination of UTP to CTP with either L-glutamine or ammonia as the source of nitrogen. Regulates intracellular CTP levels through interactions with the four ribonucleotide triphosphates. This is CTP synthase from Chlorobium phaeovibrioides (strain DSM 265 / 1930) (Prosthecochloris vibrioformis (strain DSM 265)).